The sequence spans 182 residues: Large ribosomal subunit protein uL13 (182 aa).

This sequence belongs to the universal ribosomal protein uL13 family. Part of the 50S ribosomal subunit.

Its function is as follows. This protein is one of the early assembly proteins of the 50S ribosomal subunit, although it is not seen to bind rRNA by itself. It is important during the early stages of 50S assembly. This chain is Large ribosomal subunit protein uL13, found in Pyrobaculum neutrophilum (strain DSM 2338 / JCM 9278 / NBRC 100436 / V24Sta) (Thermoproteus neutrophilus).